A 1243-amino-acid polypeptide reads, in one-letter code: Protein MMS22-like (1243 aa).

The protein belongs to the MMS22 family. MMS22L subfamily. As to quaternary structure, component of the MMS22L-TONSL complex, a complex at least composed of MMS22L and TONSL/NFKBIL2. Interacts with RAD51; interaction is direct. In terms of processing, degraded by the ubiquitin-proteasome system upon replication stress.

Its subcellular location is the nucleus. The protein resides in the chromosome. Functionally, component of the MMS22L-TONSL complex, a complex that promotes homologous recombination-mediated repair of double-strand breaks (DSBs) at stalled or collapsed replication forks. The MMS22L-TONSL complex is required to maintain genome integrity during DNA replication. It mediates the assembly of RAD51 filaments on single-stranded DNA (ssDNA): the MMS22L-TONSL complex is recruited to DSBs following histone replacement by histone chaperones and eviction of the replication protein A complex (RPA/RP-A) from DSBs. Following recruitment to DSBs, the TONSL-MMS22L complex promotes recruitment of RAD51 filaments and subsequent homologous recombination. Within the complex, MMS22L acts by binding ssDNA. The chain is Protein MMS22-like from Homo sapiens (Human).